The chain runs to 229 residues: NAD-dependent protein deacetylase (229 aa).

The Deacetylase sirtuin-type domain occupies 1-229 (MNNLKEAIKQ…NDAVKVFAEI (229 aa)). Alanine 20, arginine 32, glutamine 96, isoleucine 98, aspartate 99, histidine 114, threonine 181, serine 182, asparagine 205, and valine 223 together coordinate NAD(+). Nicotinamide-binding residues include isoleucine 98 and aspartate 99. The Proton acceptor role is filled by histidine 114.

This sequence belongs to the sirtuin family. Class U subfamily.

Its subcellular location is the cytoplasm. The enzyme catalyses N(6)-acetyl-L-lysyl-[protein] + NAD(+) + H2O = 2''-O-acetyl-ADP-D-ribose + nicotinamide + L-lysyl-[protein]. Its function is as follows. NAD-dependent protein deacetylase which modulates the activities of several enzymes which are inactive in their acetylated form. In Listeria innocua serovar 6a (strain ATCC BAA-680 / CLIP 11262), this protein is NAD-dependent protein deacetylase.